Here is a 299-residue protein sequence, read N- to C-terminus: MPT51/MPB51 antigen (299 aa).

The N-terminal stretch at 1–26 (MKGRSALLRALWIAALSFGLGGVAVA) is a signal peptide.

It belongs to the mycobacterial A85 antigen family. As to quaternary structure, homodimer.

The protein localises to the secreted. In terms of biological role, may have a role in host tissue attachment, whereby ligands may include the serum protein fibronectin and small sugars. The sequence is that of MPT51/MPB51 antigen (mpt51) from Mycobacterium bovis (strain ATCC BAA-935 / AF2122/97).